The primary structure comprises 540 residues: Chaperonin GroEL (540 aa).

Residues 29–32, 86–90, G413, 478–480, and D494 contribute to the ATP site; these read TLGP, DGTTT, and DAL.

This sequence belongs to the chaperonin (HSP60) family. Forms a cylinder of 14 subunits composed of two heptameric rings stacked back-to-back. Interacts with the co-chaperonin GroES.

It is found in the cytoplasm. The catalysed reaction is ATP + H2O + a folded polypeptide = ADP + phosphate + an unfolded polypeptide.. Functionally, together with its co-chaperonin GroES, plays an essential role in assisting protein folding. The GroEL-GroES system forms a nano-cage that allows encapsulation of the non-native substrate proteins and provides a physical environment optimized to promote and accelerate protein folding. This chain is Chaperonin GroEL, found in Clostridioides difficile (Peptoclostridium difficile).